Here is a 261-residue protein sequence, read N- to C-terminus: Imidazole glycerol phosphate synthase subunit HisF (261 aa).

Catalysis depends on residues D12 and D131.

Belongs to the HisA/HisF family. As to quaternary structure, heterodimer of HisH and HisF.

Its subcellular location is the cytoplasm. It catalyses the reaction 5-[(5-phospho-1-deoxy-D-ribulos-1-ylimino)methylamino]-1-(5-phospho-beta-D-ribosyl)imidazole-4-carboxamide + L-glutamine = D-erythro-1-(imidazol-4-yl)glycerol 3-phosphate + 5-amino-1-(5-phospho-beta-D-ribosyl)imidazole-4-carboxamide + L-glutamate + H(+). It functions in the pathway amino-acid biosynthesis; L-histidine biosynthesis; L-histidine from 5-phospho-alpha-D-ribose 1-diphosphate: step 5/9. Functionally, IGPS catalyzes the conversion of PRFAR and glutamine to IGP, AICAR and glutamate. The HisF subunit catalyzes the cyclization activity that produces IGP and AICAR from PRFAR using the ammonia provided by the HisH subunit. This is Imidazole glycerol phosphate synthase subunit HisF from Brucella anthropi (strain ATCC 49188 / DSM 6882 / CCUG 24695 / JCM 21032 / LMG 3331 / NBRC 15819 / NCTC 12168 / Alc 37) (Ochrobactrum anthropi).